Here is a 572-residue protein sequence, read N- to C-terminus: uncharacterized protein (572 aa).

Positions Pro-553–Ser-572 are disordered. Over residues Thr-561 to Ser-572 the composition is skewed to basic residues.

This is an uncharacterized protein from Homo sapiens (Human).